The following is a 195-amino-acid chain: Large ribosomal subunit protein uL11m (195 aa).

Belongs to the universal ribosomal protein uL11 family. Component of the mitochondrial ribosome large subunit (39S) which comprises a 16S rRNA and about 50 distinct proteins.

It localises to the mitochondrion. The polypeptide is Large ribosomal subunit protein uL11m (mrpl-11) (Caenorhabditis elegans).